The sequence spans 571 residues: Proline--tRNA ligase (571 aa).

This sequence belongs to the class-II aminoacyl-tRNA synthetase family. ProS type 1 subfamily. In terms of assembly, homodimer.

The protein localises to the cytoplasm. It catalyses the reaction tRNA(Pro) + L-proline + ATP = L-prolyl-tRNA(Pro) + AMP + diphosphate. Catalyzes the attachment of proline to tRNA(Pro) in a two-step reaction: proline is first activated by ATP to form Pro-AMP and then transferred to the acceptor end of tRNA(Pro). As ProRS can inadvertently accommodate and process non-cognate amino acids such as alanine and cysteine, to avoid such errors it has two additional distinct editing activities against alanine. One activity is designated as 'pretransfer' editing and involves the tRNA(Pro)-independent hydrolysis of activated Ala-AMP. The other activity is designated 'posttransfer' editing and involves deacylation of mischarged Ala-tRNA(Pro). The misacylated Cys-tRNA(Pro) is not edited by ProRS. This Buchnera aphidicola subsp. Schizaphis graminum (strain Sg) protein is Proline--tRNA ligase.